Reading from the N-terminus, the 494-residue chain is Probable malate:quinone oxidoreductase 3 (494 aa).

This sequence belongs to the MQO family. FAD is required as a cofactor.

The catalysed reaction is (S)-malate + a quinone = a quinol + oxaloacetate. The protein operates within carbohydrate metabolism; tricarboxylic acid cycle; oxaloacetate from (S)-malate (quinone route): step 1/1. In Staphylococcus epidermidis (strain ATCC 12228 / FDA PCI 1200), this protein is Probable malate:quinone oxidoreductase 3.